The sequence spans 335 residues: Acetyl-coenzyme A carboxylase carboxyl transferase subunit alpha (335 aa).

The CoA carboxyltransferase C-terminal domain occupies glutamine 40 to glutamate 294.

This sequence belongs to the AccA family. In terms of assembly, acetyl-CoA carboxylase is a heterohexamer composed of biotin carboxyl carrier protein (AccB), biotin carboxylase (AccC) and two subunits each of ACCase subunit alpha (AccA) and ACCase subunit beta (AccD).

It is found in the cytoplasm. The enzyme catalyses N(6)-carboxybiotinyl-L-lysyl-[protein] + acetyl-CoA = N(6)-biotinyl-L-lysyl-[protein] + malonyl-CoA. It participates in lipid metabolism; malonyl-CoA biosynthesis; malonyl-CoA from acetyl-CoA: step 1/1. In terms of biological role, component of the acetyl coenzyme A carboxylase (ACC) complex. First, biotin carboxylase catalyzes the carboxylation of biotin on its carrier protein (BCCP) and then the CO(2) group is transferred by the carboxyltransferase to acetyl-CoA to form malonyl-CoA. The protein is Acetyl-coenzyme A carboxylase carboxyl transferase subunit alpha of Prochlorococcus marinus (strain MIT 9515).